The chain runs to 131 residues: Antileukoproteinase (131 aa).

The signal sequence occupies residues 1-25 (MKSCGLLPFTVLLALGILAPWTVEG). WAP domains lie at 29 to 77 (DAIK…VNPV) and 83 to 131 (VWRK…LPPM). Disulfide bonds link cysteine 36–cysteine 65, cysteine 44–cysteine 69, cysteine 52–cysteine 64, cysteine 58–cysteine 73, cysteine 90–cysteine 119, cysteine 97–cysteine 123, cysteine 106–cysteine 118, and cysteine 112–cysteine 127. Residues 85-131 (RKPGRCVKTQARCMMLNPPNVCQRDGQCDGKYKCCEGICGKVCLPPM) form an elastase inhibitory domain region.

As to quaternary structure, interacts with GRN; interaction protects progranulin from proteolysis. Detected in bronchial epithelial cells. Detected in bronchoalveolar fluid after infection with M.tuberculosis (at protein level). Highest expression in lung, spleen, intestine and epididymis with lower levels in liver and seminal vesicle. No expression in brain, heart, kidney and muscle.

Its subcellular location is the secreted. Functionally, acid-stable proteinase inhibitor with strong affinities for trypsin, chymotrypsin, elastase, and cathepsin G. Modulates the innate immune response after bacterial infection. Contributes to regulate the inflammatory and immune responses to the intracellular parasite L.major. Down-regulates responses to bacterial lipopolysaccharide (LPS). Plays a role in regulating the activation of NF-kappa-B and inflammatory responses. Has antimicrobial activity against mycobacteria, but not against salmonella. Contributes to normal resistance against infection by M.tuberculosis. Required for normal resistance to L.major. Required for normal wound healing, probably by preventing tissue damage by limiting protease activity. Together with ELANE, required for normal differentiation and proliferation of bone marrow myeloid cells. This Mus musculus (Mouse) protein is Antileukoproteinase (Slpi).